A 466-amino-acid chain; its full sequence is MGKTLYEKVYEAHVAVAAEGETPILYIDRHLVHEVTSPQAFDGLREKGRQVRQVSKTFATMDHNVSTTTKDINASGEMARIQMETLIKNCQEFGVTLYDINHKYQGIVHVMGPELGITLPGMTIVCGDSHTATHGAFGSLAFGIGTSEVEHVLATQTLKQARAKTMKIEVQGKVADGITAKDIVLAIIGKTTAAGGTGYVVEFCGEAITDLSMEGRMTVCNMAIELGAKAGLIAPDQTTFDYIKGRKFAPTGADWDAAVEYWKTLKTDEDAKFDAVVTLNAADIKPQVTWGTNPGQVIAVDEPIPAPESFSDPVEKASAEKALAYMGLEAGKSLSEYKVDKVFVGSCTNSRIEDMRAAAVVAKGRKVASHVQALIVPGSEQVKAQAEAEGLDVIFKEAGFEWRLPGCSMCLAMNNDRLGPHERCASTSNRNFEGRQGRDGRTHLVSPAMAAAAAIAGHFVDIRDWK.

Cysteine 347, cysteine 407, and cysteine 410 together coordinate [4Fe-4S] cluster.

It belongs to the aconitase/IPM isomerase family. LeuC type 1 subfamily. As to quaternary structure, heterodimer of LeuC and LeuD. Requires [4Fe-4S] cluster as cofactor.

The enzyme catalyses (2R,3S)-3-isopropylmalate = (2S)-2-isopropylmalate. Its pathway is amino-acid biosynthesis; L-leucine biosynthesis; L-leucine from 3-methyl-2-oxobutanoate: step 2/4. Catalyzes the isomerization between 2-isopropylmalate and 3-isopropylmalate, via the formation of 2-isopropylmaleate. In Vibrio vulnificus (strain CMCP6), this protein is 3-isopropylmalate dehydratase large subunit.